The primary structure comprises 156 residues: uncharacterized protein (156 aa).

His-55 is an active-site residue.

Belongs to the thioester dehydratase family. FabZ subfamily.

This is an uncharacterized protein from Halalkalibacterium halodurans (strain ATCC BAA-125 / DSM 18197 / FERM 7344 / JCM 9153 / C-125) (Bacillus halodurans).